We begin with the raw amino-acid sequence, 479 residues long: Glucagon receptor (479 aa).

The first 25 residues, 1-25 (MPPARLRHPHLLLLLLLACQPQAPA), serve as a signal peptide directing secretion. Over 26–136 (AQAMDFLFQK…ELGVQREVAE (111 aa)) the chain is Extracellular. 3 disulfide bridges follow: Cys-43/Cys-67, Cys-58/Cys-100, and Cys-81/Cys-121. Asn-46, Asn-59, Asn-74, Asn-78, and Asn-117 each carry an N-linked (GlcNAc...) asparagine glycan. The helical transmembrane segment at 137 to 161 (MYSSFQAMYTAGYSLSLAALLLALA) threads the bilayer. The Cytoplasmic segment spans residues 162–173 (ILLGLSKLHCTR). A helical membrane pass occupies residues 174-198 (NYIHANLLASFVLRASSVLALDALL). Residues 199–225 (KTRYSQRLGDDLSVSIWLSDEAVAGCR) are Extracellular-facing. Residues Cys-224 and Cys-294 are joined by a disulfide bond. Residues 226 to 249 (VAAVFMQYGVVANYCWLLVEGVYL) form a helical membrane-spanning segment. Over 250-263 (HSLLRQATIPERSC) the chain is Cytoplasmic. The chain crosses the membrane as a helical span at residues 264 to 285 (FPLYLAIGWGAPMLFVIPWAVV). Over 286–303 (KCLFENIQCWTSNDNMGF) the chain is Extracellular. Residues 304–326 (WWILRFPVFLAILINFSIFIRVL) form a helical membrane-spanning segment. At 327 to 350 (HVLVAKLRAHQMRCTDYKFRLARS) the chain is on the cytoplasmic side. Residues 351–369 (TLTLIPLLGVHEVVFAFVT) traverse the membrane as a helical segment. Topologically, residues 370-381 (DEHAQGALRSAK) are extracellular. The helical transmembrane segment at 382-402 (LFFDLFLSSFQGLLVAVLYCF) threads the bilayer. At 403-479 (LNKEVQAELL…GLPGVAENPF (77 aa)) the chain is on the cytoplasmic side. The disordered stretch occupies residues 426-479 (KAHRVGSHSARPPSGPPSEKLLLSTGGSSNGTSQEPSAETHLASGLPGVAENPF). Over residues 446 to 458 (LLLSTGGSSNGTS) the composition is skewed to low complexity. Ser-458 is modified (phosphoserine).

It belongs to the G-protein coupled receptor 2 family. Post-translationally, ligand-binding promotes phosphorylation of serine residues in the C-terminal cytoplasmic domain. Phosphorylation is important for receptor endocytosis after ligand-binding.

Its subcellular location is the cell membrane. Functionally, G-protein coupled receptor for glucagon that plays a central role in the regulation of blood glucose levels and glucose homeostasis. Regulates the rate of hepatic glucose production by promoting glycogen hydrolysis and gluconeogenesis. Plays an important role in mediating the responses to fasting. Ligand binding causes a conformation change that triggers signaling via guanine nucleotide-binding proteins (G proteins) and modulates the activity of down-stream effectors, such as adenylate cyclase. Promotes activation of adenylate cyclase. Besides, plays a role in signaling via a phosphatidylinositol-calcium second messenger system. This chain is Glucagon receptor, found in Sus scrofa (Pig).